Reading from the N-terminus, the 206-residue chain is MRPLTPRQAEILELIKRNIADTGMPPTRAEIATRLGFKSANAAEEHLKALAKKGCIEIMPGTSRGIRLTAEVEEVTETGLPLIGQVAAGEPILAQEHVEQYYQVDPSMFHPAADFLLRVKGDSMKNIGILEGDLLAVHKVQQARNGQVVVARVDDDVTVKRFEKKGNVVYLHAENEDYSPIKVDLGYQSLTIEGLAVGVIRNGDWL.

Positions 28 to 48 form a DNA-binding region, H-T-H motif; that stretch reads RAEIATRLGFKSANAAEEHLK. Residues Ser-123 and Lys-160 each act as for autocatalytic cleavage activity in the active site.

This sequence belongs to the peptidase S24 family. In terms of assembly, homodimer.

It catalyses the reaction Hydrolysis of Ala-|-Gly bond in repressor LexA.. In terms of biological role, represses a number of genes involved in the response to DNA damage (SOS response), including recA and lexA. In the presence of single-stranded DNA, RecA interacts with LexA causing an autocatalytic cleavage which disrupts the DNA-binding part of LexA, leading to derepression of the SOS regulon and eventually DNA repair. This Shewanella baltica (strain OS223) protein is LexA repressor.